The sequence spans 115 residues: NADH-ubiquinone oxidoreductase chain 3 (115 aa).

The next 3 membrane-spanning stretches (helical) occupy residues 3–23 (FVLA…LTFW), 55–75 (FFLV…LLPL), and 84–104 (LPLM…GLTY).

This sequence belongs to the complex I subunit 3 family. In terms of assembly, core subunit of respiratory chain NADH dehydrogenase (Complex I) which is composed of 45 different subunits. Interacts with TMEM186. Interacts with TMEM242.

It is found in the mitochondrion inner membrane. It carries out the reaction a ubiquinone + NADH + 5 H(+)(in) = a ubiquinol + NAD(+) + 4 H(+)(out). In terms of biological role, core subunit of the mitochondrial membrane respiratory chain NADH dehydrogenase (Complex I) which catalyzes electron transfer from NADH through the respiratory chain, using ubiquinone as an electron acceptor. Essential for the catalytic activity of complex I. The chain is NADH-ubiquinone oxidoreductase chain 3 from Pongo pygmaeus (Bornean orangutan).